We begin with the raw amino-acid sequence, 447 residues long: NAD-dependent histone deacetylase HST3 (447 aa).

Positions 1–21 (MTSVSPSPPASRSGSMCSDLP) are disordered. One can recognise a Deacetylase sirtuin-type domain in the interval 35–363 (LDADDEVLRR…IKKLRQLKRE (329 aa)). NAD(+) is bound by residues 60 to 79 (GAGI…DGLY) and 151 to 154 (QNID). Residue His187 is the Proton acceptor of the active site. Zn(2+) contacts are provided by Cys195, Cys198, Cys220, and Cys223. Residues 282 to 284 (GTS), 312 to 314 (NKT), and Cys333 contribute to the NAD(+) site. The segment covering 365–375 (SDLRKQMKAQK) has biased composition (basic and acidic residues). Disordered stretches follow at residues 365–393 (SDLR…QGID) and 411–447 (KRKI…NQAS).

It belongs to the sirtuin family. Class I subfamily. Zn(2+) is required as a cofactor.

It localises to the cytoplasm. The protein localises to the nucleus. It carries out the reaction N(6)-acetyl-L-lysyl-[protein] + NAD(+) + H2O = 2''-O-acetyl-ADP-D-ribose + nicotinamide + L-lysyl-[protein]. Its function is as follows. NAD-dependent histone deacetylase, which contributes together with HST4 to histone H3 'Lys-56' deacetylation, regulation of telomeric silencing, proper cell cycle progression, DNA damage control, DNA recombination, and genomic maintenance. The sequence is that of NAD-dependent histone deacetylase HST3 (HST3) from Saccharomyces cerevisiae (strain ATCC 204508 / S288c) (Baker's yeast).